A 246-amino-acid polypeptide reads, in one-letter code: Probable transcriptional regulatory protein CTC_02215 (246 aa).

The protein belongs to the TACO1 family.

The protein resides in the cytoplasm. The chain is Probable transcriptional regulatory protein CTC_02215 from Clostridium tetani (strain Massachusetts / E88).